We begin with the raw amino-acid sequence, 396 residues long: Tyrosine--tRNA ligase (396 aa).

The 'HIGH' region signature appears at 43 to 52 (PTAPDIHLGH). Residues 227-231 (KMSKS) carry the 'KMSKS' region motif. An ATP-binding site is contributed by Lys-230. The region spanning 335-395 (IGLATLLKEA…GKRKFARVTV (61 aa)) is the S4 RNA-binding domain.

The protein belongs to the class-I aminoacyl-tRNA synthetase family. TyrS type 2 subfamily. As to quaternary structure, homodimer.

Its subcellular location is the cytoplasm. It catalyses the reaction tRNA(Tyr) + L-tyrosine + ATP = L-tyrosyl-tRNA(Tyr) + AMP + diphosphate + H(+). Functionally, catalyzes the attachment of tyrosine to tRNA(Tyr) in a two-step reaction: tyrosine is first activated by ATP to form Tyr-AMP and then transferred to the acceptor end of tRNA(Tyr). This Haemophilus ducreyi (strain 35000HP / ATCC 700724) protein is Tyrosine--tRNA ligase.